A 216-amino-acid polypeptide reads, in one-letter code: Cytochrome c biogenesis ATP-binding export protein CcmA (216 aa).

The region spanning 2 to 215 (LSVEELSCVR…SNHLRKIKLG (214 aa)) is the ABC transporter domain. 34–41 (GHNGAGKT) lines the ATP pocket.

Belongs to the ABC transporter superfamily. CcmA exporter (TC 3.A.1.107) family. In terms of assembly, the complex is composed of two ATP-binding proteins (CcmA) and two transmembrane proteins (CcmB).

Its subcellular location is the cell inner membrane. It carries out the reaction heme b(in) + ATP + H2O = heme b(out) + ADP + phosphate + H(+). Functionally, part of the ABC transporter complex CcmAB involved in the biogenesis of c-type cytochromes; once thought to export heme, this seems not to be the case, but its exact role is uncertain. Responsible for energy coupling to the transport system. The sequence is that of Cytochrome c biogenesis ATP-binding export protein CcmA from Photobacterium profundum (strain SS9).